A 337-amino-acid polypeptide reads, in one-letter code: tRNA N6-adenosine threonylcarbamoyltransferase (337 aa).

The Fe cation site is built by His111 and His115. Residues 134 to 138 (LVSGG), Asp167, Gly180, and Asn272 each bind substrate. Position 300 (Asp300) interacts with Fe cation.

The protein belongs to the KAE1 / TsaD family. Fe(2+) serves as cofactor.

The protein resides in the cytoplasm. The enzyme catalyses L-threonylcarbamoyladenylate + adenosine(37) in tRNA = N(6)-L-threonylcarbamoyladenosine(37) in tRNA + AMP + H(+). Its function is as follows. Required for the formation of a threonylcarbamoyl group on adenosine at position 37 (t(6)A37) in tRNAs that read codons beginning with adenine. Is involved in the transfer of the threonylcarbamoyl moiety of threonylcarbamoyl-AMP (TC-AMP) to the N6 group of A37, together with TsaE and TsaB. TsaD likely plays a direct catalytic role in this reaction. The polypeptide is tRNA N6-adenosine threonylcarbamoyltransferase (Escherichia coli O127:H6 (strain E2348/69 / EPEC)).